A 321-amino-acid chain; its full sequence is Ribosomal protein L11 methyltransferase (321 aa).

4 residues coordinate S-adenosyl-L-methionine: Thr150, Gly171, Asp193, and Asn256.

The protein belongs to the methyltransferase superfamily. PrmA family.

Its subcellular location is the cytoplasm. It carries out the reaction L-lysyl-[protein] + 3 S-adenosyl-L-methionine = N(6),N(6),N(6)-trimethyl-L-lysyl-[protein] + 3 S-adenosyl-L-homocysteine + 3 H(+). Methylates ribosomal protein L11. The chain is Ribosomal protein L11 methyltransferase from Herpetosiphon aurantiacus (strain ATCC 23779 / DSM 785 / 114-95).